Here is a 156-residue protein sequence, read N- to C-terminus: MKKIYVAGGCFWGVQGFLKTIKGIKKTTVGYANSLLENPTYELVKSHVTDAVETVEVIYDENILSLKDIVKKLFAVIDPTARNYQGPDHGRQYRNGFYFVDQEDGVMLRELMLEFSKKYEKPLATEILPLDNYYLAEDYHQDYFDKHPNAVCHIKF.

The active site involves cysteine 10.

It belongs to the MsrA Met sulfoxide reductase family.

The catalysed reaction is L-methionyl-[protein] + [thioredoxin]-disulfide + H2O = L-methionyl-(S)-S-oxide-[protein] + [thioredoxin]-dithiol. It catalyses the reaction [thioredoxin]-disulfide + L-methionine + H2O = L-methionine (S)-S-oxide + [thioredoxin]-dithiol. In terms of biological role, has an important function as a repair enzyme for proteins that have been inactivated by oxidation. Catalyzes the reversible oxidation-reduction of methionine sulfoxide in proteins to methionine. The polypeptide is Peptide methionine sulfoxide reductase MsrA (Metamycoplasma arthritidis (strain 158L3-1) (Mycoplasma arthritidis)).